The sequence spans 700 residues: Putative proline-rich receptor-like protein kinase PERK6 (700 aa).

A disordered region spans residues 1–180 (MAEGQSPENS…SGGGSNSSGN (180 aa)). Residues 1 to 186 (MAEGQSPENS…SSGNNEPNTA (186 aa)) are Extracellular-facing. 2 stretches are compositionally biased toward pro residues: residues 9 to 19 (NSPPSPTPPSP) and 29 to 47 (SPPP…PPPD). Positions 48-137 (DSSNGSPQPP…GNNNDNNNQN (90 aa)) are enriched in low complexity. An N-linked (GlcNAc...) asparagine glycan is attached at Asn-176. The helical transmembrane segment at 187 to 207 (AIVGIVAGAGLLFLVMILFCV) threads the bilayer. Over 208-700 (CCCRKKKKKH…NNKTTPSRDH (493 aa)) the chain is Cytoplasmic. A disordered region spans residues 249–315 (NLSQQYPGSN…GPSVPPPHPS (67 aa)). Residues 255 to 265 (PGSNGNNNWMN) are compositionally biased toward low complexity. The segment covering 266-286 (SPPPPPPGSWQPSPPPPPPPV) has biased composition (pro residues). Thr-326 is modified (phosphothreonine). Residues 337-615 (FSQSRLLGQG…VRALEGDATL (279 aa)) enclose the Protein kinase domain. ATP-binding positions include 343 to 351 (LGQGGFGYV) and Lys-365. Tyr-410 bears the Phosphotyrosine mark. The active-site Proton acceptor is the Asp-461. Phosphoserine is present on residues Ser-465 and Ser-494. Phosphothreonine occurs at positions 495 and 500. Tyr-508 carries the phosphotyrosine modification. Disordered regions lie at residues 616–642 (DDLS…DSST) and 659–700 (EYGA…SRDH). Positions 689–700 (ANNNKTTPSRDH) are enriched in polar residues.

This sequence belongs to the protein kinase superfamily. Ser/Thr protein kinase family. As to expression, mostly expressed in flower buds.

Its subcellular location is the cell membrane. The enzyme catalyses L-seryl-[protein] + ATP = O-phospho-L-seryl-[protein] + ADP + H(+). It catalyses the reaction L-threonyl-[protein] + ATP = O-phospho-L-threonyl-[protein] + ADP + H(+). The polypeptide is Putative proline-rich receptor-like protein kinase PERK6 (PERK6) (Arabidopsis thaliana (Mouse-ear cress)).